Reading from the N-terminus, the 104-residue chain is Large ribosomal subunit protein uL24 (104 aa).

The protein belongs to the universal ribosomal protein uL24 family. Part of the 50S ribosomal subunit.

Functionally, one of two assembly initiator proteins, it binds directly to the 5'-end of the 23S rRNA, where it nucleates assembly of the 50S subunit. One of the proteins that surrounds the polypeptide exit tunnel on the outside of the subunit. This is Large ribosomal subunit protein uL24 from Shewanella baltica (strain OS223).